The chain runs to 247 residues: ATP synthase subunit a, chloroplastic (247 aa).

The next 5 helical transmembrane spans lie at 38–58 (QVLITSWVVIVILLGSAIVTV), 95–115 (VPFIGTLFLFIFVSNWSGALL), 134–154 (INTTVALALLTSIAYFYAGLS), 199–219 (LVVVVLVSLVPSVVPIPVMFL), and 220–240 (GLFTSGIQALIFATLAAAYIG).

The protein belongs to the ATPase A chain family. As to quaternary structure, F-type ATPases have 2 components, CF(1) - the catalytic core - and CF(0) - the membrane proton channel. CF(1) has five subunits: alpha(3), beta(3), gamma(1), delta(1), epsilon(1). CF(0) has four main subunits: a, b, b' and c.

It localises to the plastid. The protein resides in the chloroplast thylakoid membrane. In terms of biological role, key component of the proton channel; it plays a direct role in the translocation of protons across the membrane. The protein is ATP synthase subunit a, chloroplastic of Populus trichocarpa (Western balsam poplar).